The sequence spans 417 residues: GTP-binding protein YPT11 (417 aa).

The tract at residues 1–34 (MSQRKRYSLNVVTSPSIPSPTPSAPIRTNESNWE) is disordered. GTP is bound by residues 97–104 (GDANVGKT), 228–232 (DTAGQ), and 292–295 (NKID). 2 S-geranylgeranyl cysteine lipidation sites follow: C415 and C416.

This sequence belongs to the small GTPase superfamily. Rab family. Interacts with MYO2 (via C-terminal tail domain). Interacts with YIF1, YIP3, YIP4 and YIP5.

It is found in the endoplasmic reticulum membrane. Its subcellular location is the bud tip. The protein resides in the bud neck. Functionally, involved in the positive control of both endoplasmic reticulum (ER) and mitochondrion inheritance during cell divison. Required for the MYO2-dependent retention of newly inherited mitochondria at the bud tip in developing daughter cells. This chain is GTP-binding protein YPT11 (YPT11), found in Saccharomyces cerevisiae (strain AWRI1631) (Baker's yeast).